Consider the following 281-residue polypeptide: Streptomycin biosynthesis protein StrF (281 aa).

The protein operates within antibiotic biosynthesis; streptomycin biosynthesis. Functionally, may be involved in the formation of N-methyl-L-glucosamine. The sequence is that of Streptomycin biosynthesis protein StrF (strF) from Streptomyces griseus.